The primary structure comprises 529 residues: Acid-sensing ion channel 1C (529 aa).

The Cytoplasmic segment spans residues 1–51 (MTAMKGDSEDSIESMRPSNLQVFANNSTLHGMSHIFAYGHMTFRRFLWTLS). Residues 52–68 (FMGSLGLLMYVCMDRVY) traverse the membrane as a helical segment. At 69 to 427 (YYFEFPHVTK…EKIEQKKAYE (359 aa)) the chain is on the extracellular side. Residues N86, N155, and N161 are each glycosylated (N-linked (GlcNAc...) asparagine). Cystine bridges form between C95/C196, C174/C181, C292/C367, C310/C363, C314/C361, C323/C345, and C325/C337. The N-linked (GlcNAc...) asparagine glycan is linked to N185. N368 and N395 each carry an N-linked (GlcNAc...) asparagine glycan. A discontinuously helical membrane pass occupies residues 428 to 458 (VAGLLGDIGGQMGLFIGASVLTILEIFDYLY). The GAS motif; ion selectivity filter motif lies at 444–446 (GAS). Over 459–529 (EVLKDKILGS…PFVVGSNSGK (71 aa)) the chain is Cytoplasmic.

This sequence belongs to the amiloride-sensitive sodium channel (TC 1.A.6) family. ASIC1 subfamily. In terms of assembly, homotrimer. Heterotrimer; with other ASIC proteins producing channel with different properties. Interacts with asic1a. Expressed in central nervous system.

The protein localises to the cell membrane. The protein resides in the postsynaptic cell membrane. Its subcellular location is the cell projection. It is found in the dendrite. It catalyses the reaction Na(+)(in) = Na(+)(out). It carries out the reaction K(+)(in) = K(+)(out). The catalysed reaction is Li(+)(in) = Li(+)(out). The enzyme catalyses Ca(2+)(in) = Ca(2+)(out). Inhibited by the diuretic drug amiloride. Its function is as follows. Forms voltage-independent, pH-gated trimeric sodium channels that act as postsynaptic excitatory receptors in the nervous system, playing a crucial role in regulating synaptic plasticity, learning, and memory. Upon extracellular pH drop this channel elicits transient, fast activating, and completely desensitizing inward currents. Displays high selectivity for sodium ions but can also permit the permeation of other cations. This chain is Acid-sensing ion channel 1C, found in Danio rerio (Zebrafish).